We begin with the raw amino-acid sequence, 1311 residues long: Clustered mitochondria protein homolog (1311 aa).

Residues 1 to 46 (MAATNEVIPTSENPSDVSGSSQKLATEETALANGVDHEEEDSGEAG) are disordered. Over residues 7–24 (VIPTSENPSDVSGSSQKL) the composition is skewed to polar residues. One can recognise a Clu domain in the interval 335-579 (DITRTQENYL…RVTPLDITWM (245 aa)). Disordered stretches follow at residues 629–691 (ERKR…QERI) and 915–965 (QSQT…VNAS). A compositionally biased stretch (basic and acidic residues) spans 655-691 (EASKSDEPTENGELAKKADESDKDAEPSKPAADQERI). Residues 915 to 930 (QSQTEAAAAPPTTNGE) show a composition bias toward polar residues. TPR repeat units lie at residues 1034–1067 (ARVYNSLSMLYYQLDEKEAAMELARKAVIVSERT), 1076–1109 (LLNYLNLGLIAHASGETKLALTYIKHALDLWKVV), and 1118–1151 (ITTINNAAVMLQHLKEYHDSRTWFEASLKICEEV). Residues 1236–1311 (VSPRVTLGQT…RGGAAAAAGK (76 aa)) are disordered. Residues 1242–1253 (LGQTQLQPQVGQ) show a composition bias toward polar residues. The span at 1259 to 1279 (AGRDSRSSRGLDSRSIDELLK) shows a compositional bias: basic and acidic residues. Residues 1289–1303 (KNKKRPGRSNPKRRG) are compositionally biased toward basic residues.

This sequence belongs to the CLU family. As to quaternary structure, may associate with the eukaryotic translation initiation factor 3 (eIF-3) complex.

It localises to the cytoplasm. In terms of biological role, mRNA-binding protein involved in proper cytoplasmic distribution of mitochondria. This Sclerotinia sclerotiorum (strain ATCC 18683 / 1980 / Ss-1) (White mold) protein is Clustered mitochondria protein homolog.